Reading from the N-terminus, the 369-residue chain is Phospho-N-acetylmuramoyl-pentapeptide-transferase (369 aa).

Helical transmembrane passes span 30-50 (LAIF…IRWM), 74-94 (GTPT…TLLW), 97-117 (LSNP…LLGF), 136-156 (IRLA…IVFA), 177-197 (YFVD…VGAA), 208-228 (GLAT…AYLV), 244-264 (GVGE…GFLW), 272-292 (IFMG…VAVA), 297-317 (IVLA…IIQV), and 346-366 (TVVI…LATL).

The protein belongs to the glycosyltransferase 4 family. MraY subfamily. Requires Mg(2+) as cofactor.

The protein resides in the cell inner membrane. It catalyses the reaction UDP-N-acetyl-alpha-D-muramoyl-L-alanyl-gamma-D-glutamyl-meso-2,6-diaminopimeloyl-D-alanyl-D-alanine + di-trans,octa-cis-undecaprenyl phosphate = di-trans,octa-cis-undecaprenyl diphospho-N-acetyl-alpha-D-muramoyl-L-alanyl-D-glutamyl-meso-2,6-diaminopimeloyl-D-alanyl-D-alanine + UMP. Its pathway is cell wall biogenesis; peptidoglycan biosynthesis. Its function is as follows. Catalyzes the initial step of the lipid cycle reactions in the biosynthesis of the cell wall peptidoglycan: transfers peptidoglycan precursor phospho-MurNAc-pentapeptide from UDP-MurNAc-pentapeptide onto the lipid carrier undecaprenyl phosphate, yielding undecaprenyl-pyrophosphoryl-MurNAc-pentapeptide, known as lipid I. The chain is Phospho-N-acetylmuramoyl-pentapeptide-transferase from Phenylobacterium zucineum (strain HLK1).